A 48-amino-acid polypeptide reads, in one-letter code: Cytochrome c oxidase subunit 2 (48 aa).

The Mitochondrial intermembrane segment spans residues 1–14 (MAHPAQLGLQDASS). Residues 15-45 (PIXEELLHFHEDALMIVFLISTLVLYIITTT) traverse the membrane as a helical segment. Residues 46–48 (VST) are Mitochondrial matrix-facing.

Belongs to the cytochrome c oxidase subunit 2 family. In terms of assembly, component of the cytochrome c oxidase (complex IV, CIV), a multisubunit enzyme composed of 14 subunits. The complex is composed of a catalytic core of 3 subunits MT-CO1, MT-CO2 and MT-CO3, encoded in the mitochondrial DNA, and 11 supernumerary subunits COX4I, COX5A, COX5B, COX6A, COX6B, COX6C, COX7A, COX7B, COX7C, COX8 and NDUFA4, which are encoded in the nuclear genome. The complex exists as a monomer or a dimer and forms supercomplexes (SCs) in the inner mitochondrial membrane with NADH-ubiquinone oxidoreductase (complex I, CI) and ubiquinol-cytochrome c oxidoreductase (cytochrome b-c1 complex, complex III, CIII), resulting in different assemblies (supercomplex SCI(1)III(2)IV(1) and megacomplex MCI(2)III(2)IV(2)). Found in a complex with TMEM177, COA6, COX18, COX20, SCO1 and SCO2. Interacts with TMEM177 in a COX20-dependent manner. Interacts with COX20. Interacts with COX16. Cu cation is required as a cofactor.

Its subcellular location is the mitochondrion inner membrane. The enzyme catalyses 4 Fe(II)-[cytochrome c] + O2 + 8 H(+)(in) = 4 Fe(III)-[cytochrome c] + 2 H2O + 4 H(+)(out). Functionally, component of the cytochrome c oxidase, the last enzyme in the mitochondrial electron transport chain which drives oxidative phosphorylation. The respiratory chain contains 3 multisubunit complexes succinate dehydrogenase (complex II, CII), ubiquinol-cytochrome c oxidoreductase (cytochrome b-c1 complex, complex III, CIII) and cytochrome c oxidase (complex IV, CIV), that cooperate to transfer electrons derived from NADH and succinate to molecular oxygen, creating an electrochemical gradient over the inner membrane that drives transmembrane transport and the ATP synthase. Cytochrome c oxidase is the component of the respiratory chain that catalyzes the reduction of oxygen to water. Electrons originating from reduced cytochrome c in the intermembrane space (IMS) are transferred via the dinuclear copper A center (CU(A)) of subunit 2 and heme A of subunit 1 to the active site in subunit 1, a binuclear center (BNC) formed by heme A3 and copper B (CU(B)). The BNC reduces molecular oxygen to 2 water molecules using 4 electrons from cytochrome c in the IMS and 4 protons from the mitochondrial matrix. This chain is Cytochrome c oxidase subunit 2 (mt-co2), found in Polypterus sp. (Bichir).